Consider the following 139-residue polypeptide: Small ribosomal subunit protein uS12 (139 aa).

Residues 1–44 (MPTINQLVKKPRTSKVKKSTAPALNKGYNSHKKKATDLASPQKR) form a disordered region. Basic residues predominate over residues 9-18 (KKPRTSKVKK). At D102 the chain carries 3-methylthioaspartic acid.

The protein belongs to the universal ribosomal protein uS12 family. As to quaternary structure, part of the 30S ribosomal subunit. Contacts proteins S8 and S17. May interact with IF1 in the 30S initiation complex.

In terms of biological role, with S4 and S5 plays an important role in translational accuracy. Functionally, interacts with and stabilizes bases of the 16S rRNA that are involved in tRNA selection in the A site and with the mRNA backbone. Located at the interface of the 30S and 50S subunits, it traverses the body of the 30S subunit contacting proteins on the other side and probably holding the rRNA structure together. The combined cluster of proteins S8, S12 and S17 appears to hold together the shoulder and platform of the 30S subunit. The chain is Small ribosomal subunit protein uS12 from Macrococcus caseolyticus (strain JCSC5402) (Macrococcoides caseolyticum).